Here is a 695-residue protein sequence, read N- to C-terminus: Probable glutamine--tRNA ligase (695 aa).

A 'HIGH' region motif is present at residues 201 to 211 (PEPNGILHIGH). ATP contacts are provided by residues 202-204 (EPN) and 208-214 (HIGHAKA). 2 residues coordinate L-glutamine: Asp234 and Tyr391. ATP-binding positions include Thr410, 439-440 (RL), and 447-449 (LSK). Positions 446–450 (VLSKR) match the 'KMSKS' region motif.

The protein belongs to the class-I aminoacyl-tRNA synthetase family.

The enzyme catalyses tRNA(Gln) + L-glutamine + ATP = L-glutaminyl-tRNA(Gln) + AMP + diphosphate. This chain is Probable glutamine--tRNA ligase, found in Vairimorpha ceranae (strain BRL01) (Microsporidian parasite).